Reading from the N-terminus, the 807-residue chain is Hyaluronate lyase (807 aa).

The first 40 residues, 1-40, serve as a signal peptide directing secretion; it reads MTYRIKKWQKLSTITLLMAGVITLNGGEFRSVDKHQIAVA. Catalysis depends on residues Asn-241, His-297, and Tyr-306.

It belongs to the polysaccharide lyase 8 family.

It localises to the secreted. The catalysed reaction is [hyaluronan](n) = n 3-(4-deoxy-beta-D-gluc-4-enuronosyl)-N-acetyl-D-glucosamine + H2O. The polypeptide is Hyaluronate lyase (Staphylococcus aureus (strain NCTC 8325 / PS 47)).